Here is a 416-residue protein sequence, read N- to C-terminus: MGLERVVVIGLGVSGRSIARFLAQKGVCVLGVDKSLHALQNCPYIQEKYLENEEFPSQVDYVVRSPGVSKEHPWVQAAIASHIPVMTDIQLAFQTEKFTERESLAITGTTGKTTTILFLEYLFKRSGIPAFAMGNVGIPILDGMQNPGVRIVEISSFQLADQEKSYPVLSGGMILNISDNHLDYHGNFSEYFQAKQNLALCMRNPDDLWVGDERFYGHLYLEEVQKYMRLLDKESALKPLYLHDKYNYCCAYLLAKIEFPISETSFIEAVATFNKPPHRMEYLGQKQGIHYINDSKATTVSATETALLGVGNQAIVILGGRNKGCTFSSLLPALRKAAKSVVAMGECAQEIARDLEEFPVTVVKNLSEALLCAEEQAVPGDVIVLSPACASFDQFRSYEERGAMFKHLVGMEEVLL.

Position 108 to 114 (108 to 114 (GTTGKTT)) interacts with ATP.

This sequence belongs to the MurCDEF family.

It localises to the cytoplasm. The catalysed reaction is UDP-N-acetyl-alpha-D-muramoyl-L-alanine + D-glutamate + ATP = UDP-N-acetyl-alpha-D-muramoyl-L-alanyl-D-glutamate + ADP + phosphate + H(+). It participates in cell wall biogenesis; peptidoglycan biosynthesis. In terms of biological role, cell wall formation. Catalyzes the addition of glutamate to the nucleotide precursor UDP-N-acetylmuramoyl-L-alanine (UMA). This Chlamydia trachomatis serovar L2 (strain ATCC VR-902B / DSM 19102 / 434/Bu) protein is UDP-N-acetylmuramoylalanine--D-glutamate ligase.